The chain runs to 405 residues: Probable glucan 1,3-beta-glucosidase A (405 aa).

The N-terminal stretch at 1–26 (MFPRISQAAILAHSLLAVCTSAATLA) is a signal peptide. Glu198 acts as the Proton donor in catalysis. 2 cysteine pairs are disulfide-bonded: Cys278–Cys403 and Cys304–Cys330. Catalysis depends on Glu296, which acts as the Nucleophile.

The protein belongs to the glycosyl hydrolase 5 (cellulase A) family. As to quaternary structure, monomer. Mn(2+) serves as cofactor.

It localises to the secreted. It catalyses the reaction Successive hydrolysis of beta-D-glucose units from the non-reducing ends of (1-&gt;3)-beta-D-glucans, releasing alpha-glucose.. Beta-glucanases participate in the metabolism of beta-glucan, the main structural component of the cell wall. It could also function biosynthetically as a transglycosylase. This Emericella nidulans (strain FGSC A4 / ATCC 38163 / CBS 112.46 / NRRL 194 / M139) (Aspergillus nidulans) protein is Probable glucan 1,3-beta-glucosidase A (exgA).